The following is a 192-amino-acid chain: Fe/S biogenesis protein NfuA (192 aa).

[4Fe-4S] cluster-binding residues include Cys-149 and Cys-152.

This sequence belongs to the NfuA family. In terms of assembly, homodimer. [4Fe-4S] cluster serves as cofactor.

Its function is as follows. Involved in iron-sulfur cluster biogenesis. Binds a 4Fe-4S cluster, can transfer this cluster to apoproteins, and thereby intervenes in the maturation of Fe/S proteins. Could also act as a scaffold/chaperone for damaged Fe/S proteins. The polypeptide is Fe/S biogenesis protein NfuA (Shewanella frigidimarina (strain NCIMB 400)).